We begin with the raw amino-acid sequence, 396 residues long: OTU domain-containing protein 3 (396 aa).

The interval 1 to 49 is disordered; it reads MSRKQAAKSRPGSGGRRAEAERKRDERAARRALAKERRNRPDPGGSGCE. Basic and acidic residues predominate over residues 16-41; it reads RRAEAERKRDERAARRALAKERRNRP. The OTU domain occupies 64 to 188; sequence LKLREVPGDG…GEHYDSVRRI (125 aa). Position 65 is an N6-acetyllysine (Lys-65). The cys-loop stretch occupies residues 69 to 75; that stretch reads VPGDGNC. The active site involves Asp-72. Cys-75 serves as the catalytic Nucleophile. N6-acetyllysine occurs at positions 121 and 128. Residues 126 to 136 are variable-loop; that stretch reads LSKPGTFAGND. Positions 176–181 are his-loop; the sequence is YRYGEH. The active site involves His-181. At Lys-219 the chain carries N6-acetyllysine. The UBA-like domain maps to 229–269; sequence DDVEDAVHKVGSATGCTDFNLIVQNLEAENYNIKSAITALL. The disordered stretch occupies residues 275–381; that stretch reads TGNDAEENHE…RDTGRSEADM (107 aa). Composition is skewed to basic and acidic residues over residues 280–301, 312–331, and 343–379; these read EENHEPGDRVKQRGPSREEAGS, NEGRMETSEARASPAEESKA, and QRREQQRLEKKKRQEERHRLKALENRNGSRDTGRSEA. N6-acetyllysine is present on Lys-290.

Post-translationally, glucose and fatty acids stimulate CREBBP-dependent acetylation, promoting its nuclear translocation.

It is found in the cytoplasm. The protein localises to the nucleus. It catalyses the reaction Thiol-dependent hydrolysis of ester, thioester, amide, peptide and isopeptide bonds formed by the C-terminal Gly of ubiquitin (a 76-residue protein attached to proteins as an intracellular targeting signal).. In terms of biological role, deubiquitinating enzyme that hydrolyzes 'Lys-6'- and 'Lys-11'-linked polyubiquitin. Also hydrolyzes heterotypic (mixed and branched) and homotypic chains. Important regulator of energy metabolism. Glucose and fatty acids trigger its nuclear translocation by CBP-dependent acetylation. In the nucleus, deubiquitinates and stabilizes the nuclear receptor PPARD regulating the expression of various genes involved in glucose and lipid metabolism and oxidative phosphorylation. Also acts as a negative regulator of the ribosome quality control (RQC) by mediating deubiquitination of 40S ribosomal proteins RPS10/eS10 and RPS20/uS10, thereby antagonizing ZNF598-mediated 40S ubiquitination. This is OTU domain-containing protein 3 (Otud3) from Mus musculus (Mouse).